The chain runs to 226 residues: MTDLSPVLTIDGPSGAGKGTVSRIVAARLGWHYLDSGALYRAVGVAASWADLDVSDPAALVRCAFDTKVEFDEAGEAGLRVLVNGVDATSELRLETTGALASAIAAIPEVRSALKERQRAFRQPPGLVADGRDMGTVIFPDAAFKVFLTASAEERAGRRHKQLMEKGVSVIFDDLLREIMARDARDAQRVVAPLRPAEDAVLIDTSGIGIEDVVQRVVGLLDSRTP.

12–20 (GPSGAGKGT) serves as a coordination point for ATP.

The protein belongs to the cytidylate kinase family. Type 1 subfamily.

The protein localises to the cytoplasm. The catalysed reaction is CMP + ATP = CDP + ADP. It catalyses the reaction dCMP + ATP = dCDP + ADP. This is Cytidylate kinase from Xanthomonas campestris pv. campestris (strain 8004).